A 308-amino-acid chain; its full sequence is MELIKEIKNLKRNKNAIILGHNYMEYGVQLVSDFTGDSYDLAVKAMKTNADIIVFAGVYFMAEQAAALNPDKKVLSPDPNAGCSLSDSLDVDTLKKYKEMYPNAPVVLYINTSIYTKALADYIVTSSTAIKVVKSLDADTIIFGPDANLANYVERKTGKRLVKVPPNGRCIVHANYTRQLVELARKKYPNAILMAHPESPLEILEASDFVGSTNQMIKFAKESPYKEFIVATELGMINALKLQVPEKTFYPLVTTEAYACARCPYMAMITLEKIKRSLEEEIYEVKVPKDIAERAKEAFERTMRLLNN.

His21 and Ser38 together coordinate iminosuccinate. Cys83 is a [4Fe-4S] cluster binding site. Iminosuccinate contacts are provided by residues 109-111 (YIN) and Ser126. Cys170 lines the [4Fe-4S] cluster pocket. Residues 196-198 (HPE) and Thr213 contribute to the iminosuccinate site. Cys263 is a [4Fe-4S] cluster binding site.

The protein belongs to the quinolinate synthase family. Type 2 subfamily. [4Fe-4S] cluster serves as cofactor.

The protein localises to the cytoplasm. It catalyses the reaction iminosuccinate + dihydroxyacetone phosphate = quinolinate + phosphate + 2 H2O + H(+). The protein operates within cofactor biosynthesis; NAD(+) biosynthesis; quinolinate from iminoaspartate: step 1/1. Functionally, catalyzes the condensation of iminoaspartate with dihydroxyacetone phosphate to form quinolinate. The polypeptide is Quinolinate synthase (Sulfurisphaera tokodaii (strain DSM 16993 / JCM 10545 / NBRC 100140 / 7) (Sulfolobus tokodaii)).